Consider the following 604-residue polypeptide: Microtubule-associated protein 70-4 (604 aa).

The segment at 1-33 is disordered; the sequence is MEERGFMSPSLAISASYREGGSKGMSRRRSMRP. Positions 49–351 form a coiled coil; it reads DPVRIELNRL…ADRAAKSEAQ (303 aa). The required for targeting to microtubules stretch occupies residues 233 to 470; the sequence is IIDKMHRQKV…PLNHKSSEGT (238 aa). 2 disordered regions span residues 367–422 and 434–495; these read LKGP…RSLT and GTSR…NDSV. A compositionally biased stretch (low complexity) spans 371-385; the sequence is TSSSSRGTSVGRSSS. Polar residues-rich tracts occupy residues 401–422 and 468–478; these read PKIT…RSLT and EGTSRGESPSS. Residues 521–569 are a coiled coil; sequence LRDKDEAIEMLAKKVETLTKAMDVEAKKMRREVAVMGKEVAAMRVVDKG.

This sequence belongs to the MAP70 family.

Its subcellular location is the cytoplasm. It is found in the cytoskeleton. Plant-specific protein that interact with microtubules. The chain is Microtubule-associated protein 70-4 (MAP70.4) from Arabidopsis thaliana (Mouse-ear cress).